Reading from the N-terminus, the 308-residue chain is Glutaminase (308 aa).

Residues serine 66, asparagine 117, glutamate 161, asparagine 168, tyrosine 192, tyrosine 244, and valine 262 each coordinate substrate.

The protein belongs to the glutaminase family. As to quaternary structure, homotetramer.

It carries out the reaction L-glutamine + H2O = L-glutamate + NH4(+). This Salmonella agona (strain SL483) protein is Glutaminase.